The sequence spans 760 residues: Heat shock transcription factor (760 aa).

2 disordered regions span residues 1–132 (MIMN…PPVV) and 206–276 (FHPL…GPKT). 2 stretches are compositionally biased toward polar residues: residues 19-31 (TESN…SSPS) and 38-88 (RSGT…SNKL). Residues 119–130 (DYKDSIDLDKPP) show a composition bias toward basic and acidic residues. A compositionally biased stretch (low complexity) spans 221–247 (AGPANNSQQQQQQQQQDSSIPSDGISS). The DNA-binding element occupies 276–385 (TRPAFVMKIW…EDLLDKIVRN (110 aa)). Residues 414 to 467 (ELETIKMNQYVISEDLRRVRQDNKMLWQENYLNRERNQVQGRTLDKILKFLSVV) form an involved in trimerization region. 4 disordered regions span residues 492–545 (TQYR…NNNN), 560–582 (LTNR…EGSI), 609–630 (HQPG…SAPS), and 674–760 (QEQH…VSDH). The segment covering 515–539 (NSRFARDNNQTAQPTYESPLSTSDT) has biased composition (polar residues). Position 570 is a phosphoserine (Ser-570). Thr-574 carries the phosphothreonine modification. Phosphoserine is present on Ser-576. The residue at position 577 (Thr-577) is a Phosphothreonine. Residues 613–628 (ATTNNNNHSSSTAISA) are compositionally biased toward low complexity. Positions 646–684 (RNLDDLEKHINKEGQSIQQVQDWIDKLAQEQHEKQQQQQ) form a coiled coil. Composition is skewed to polar residues over residues 701–722 (ATTT…NISF) and 731–742 (PGSNVSSNINDS). The segment covering 744–760 (GNEKKSKKRSIEEVSDH) has biased composition (basic and acidic residues).

The protein belongs to the HSF family. As to quaternary structure, homotrimer. Homotrimerization increases the affinity of HSF1 to DNA. Interacts with HSP90. Activated by phosphorylation of at least Ser-570, Thr-574, Ser-576 and Thr-577 in response to heat shock. Additional unidentified residues are also phosphorylated in response to heat shock.

It localises to the nucleus. Functionally, DNA-binding transcription factor that specifically binds heat shock promoter elements (HSE) and activates transcription. With HSP90, is required for the modulation of the chaperone levels in response to growth temperature, rather than the activation of acute responses to sudden thermal transitions. Activated during infection and contributes to full virulence. The protein is Heat shock transcription factor of Candida albicans (strain SC5314 / ATCC MYA-2876) (Yeast).